Consider the following 296-residue polypeptide: Protoheme IX farnesyltransferase (296 aa).

The next 8 membrane-spanning stretches (helical) occupy residues 8 to 28 (VTKPGIIMGNLISVAGGFFLA), 35 to 55 (WILMLATVIGLSLVVASGCAI), 84 to 104 (AAFFHGIVLGVIGFALLSYFT), 107 to 127 (VAVAFAAFGYVVYVGLYTMYF), 132 to 152 (VYGTFVGSLSGAVPPVVGYCA), 162 to 182 (AILLTMFCIWQMPHSYAIAIF), 215 to 235 (FAVVAALLPLTGYVGIGFMVV), and 264 to 284 (VFFFSIITVTALSVTMALDFN).

The protein belongs to the UbiA prenyltransferase family. Protoheme IX farnesyltransferase subfamily.

The protein resides in the cell inner membrane. It catalyses the reaction heme b + (2E,6E)-farnesyl diphosphate + H2O = Fe(II)-heme o + diphosphate. It participates in porphyrin-containing compound metabolism; heme O biosynthesis; heme O from protoheme: step 1/1. Converts heme B (protoheme IX) to heme O by substitution of the vinyl group on carbon 2 of heme B porphyrin ring with a hydroxyethyl farnesyl side group. The protein is Protoheme IX farnesyltransferase of Marinomonas sp. (strain MWYL1).